A 392-amino-acid chain; its full sequence is G2/mitotic-specific cyclin-B2 (392 aa).

Belongs to the cyclin family. Cyclin AB subfamily. As to quaternary structure, interacts with the CDK1 protein kinase to form a serine/threonine kinase holoenzyme complex also known as maturation promoting factor (MPF). The cyclin subunit imparts substrate specificity to the complex.

Functionally, essential for the control of the cell cycle at the G2/M (mitosis) transition. The protein is G2/mitotic-specific cyclin-B2 (CCNB2) of Rana japonica (Japanese reddish frog).